Reading from the N-terminus, the 504-residue chain is Catalase (504 aa).

Residues His-56 and Asn-129 contribute to the active site. Position 339 (Tyr-339) interacts with heme.

This sequence belongs to the catalase family. In terms of assembly, homodimer. Heme serves as cofactor.

It carries out the reaction 2 H2O2 = O2 + 2 H2O. Functionally, decomposes hydrogen peroxide into water and oxygen; serves to protect cells from the toxic effects of hydrogen peroxide. The sequence is that of Catalase (katA) from Staphylococcus epidermidis.